We begin with the raw amino-acid sequence, 360 residues long: MGVKDILSRKTGVIVGDDVLRLFQHAQEKVFAIPAINVTSSSTVVAALEAARDKNSPIILQVSQGGAAFFAGKGVPNGKQEASVAGAIAAAHYIRSIAPSYGIPVVLHTDHCAKKLLPWLDGMLDADECYFKLHNEPLFSSHMIDLSEESVEWNIETTAKYLKRAAPMKQWLEMEIGITGGEEDGVNNESVDNNSLYTQPEDIYTIYKTLSAISPYFSIAAGFGNVHGVYKPGNVRLHPELLSKHQAYVKEKTGSSKNKPVYLVFHGGSGSTKAEFKEAISYGVVKVNLDTDLQYAYLSGVRDFVLKKKDYLMSAVGNPEGEDKPNKKYFDPRVWIREGEKTMSARVQEAFDDFNTSNQL.

Ser63 provides a ligand contact to D-glyceraldehyde 3-phosphate. The Proton donor role is filled by Asp110. Residues His111, Asp145, Glu175, and His227 each coordinate Zn(2+). A dihydroxyacetone phosphate-binding site is contributed by Gly228. His266 contacts Zn(2+). A dihydroxyacetone phosphate-binding site is contributed by 267–269 (GGS).

The protein belongs to the class II fructose-bisphosphate aldolase family. Homodimer. Requires Zn(2+) as cofactor.

It catalyses the reaction beta-D-fructose 1,6-bisphosphate = D-glyceraldehyde 3-phosphate + dihydroxyacetone phosphate. Its pathway is carbohydrate degradation; glycolysis; D-glyceraldehyde 3-phosphate and glycerone phosphate from D-glucose: step 4/4. Catalyzes the aldol condensation of dihydroxyacetone phosphate (DHAP or glycerone-phosphate) with glyceraldehyde 3-phosphate (G3P) to form fructose 1,6-bisphosphate (FBP) in gluconeogenesis and the reverse reaction in glycolysis. The protein is Fructose-bisphosphate aldolase 1 (FBA1) of Paracoccidioides lutzii (strain ATCC MYA-826 / Pb01) (Paracoccidioides brasiliensis).